Here is a 264-residue protein sequence, read N- to C-terminus: Regulator of cytoskeleton and endocytosis RVS161 (264 aa).

One can recognise a BAR domain in the interval Ala15–Ala239.

The protein localises to the cytoplasm. It localises to the cytoskeleton. In terms of biological role, component of a cytoskeletal structure that is required for the formation of endocytic vesicles at the plasma membrane level. Plays an important role in virulence. The polypeptide is Regulator of cytoskeleton and endocytosis RVS161 (RVS161) (Candida albicans (strain SC5314 / ATCC MYA-2876) (Yeast)).